A 408-amino-acid polypeptide reads, in one-letter code: Neutral cholesterol ester hydrolase 1 (408 aa).

Topologically, residues 1 to 4 (MRSS) are cytoplasmic. A helical; Signal-anchor for type II membrane protein transmembrane segment spans residues 5 to 25 (CVLLAALLALVAYYVYIPLPS). Residues 26–408 (AVSDPWKLML…SYFKWLDQNL (383 aa)) are Lumenal-facing. The short motif at 113–115 (HGG) is the Involved in the stabilization of the negatively charged intermediate by the formation of the oxyanion hole element. Serine 191 is an active-site residue. An N-linked (GlcNAc...) asparagine glycan is attached at asparagine 270. Aspartate 348 is an active-site residue. Asparagine 367 carries N-linked (GlcNAc...) asparagine glycosylation. Histidine 378 is an active-site residue. Asparagine 389 carries an N-linked (GlcNAc...) asparagine glycan.

The protein belongs to the 'GDXG' lipolytic enzyme family. In terms of processing, N-glycosylated.

The protein localises to the cell membrane. Its subcellular location is the microsome. It carries out the reaction a 1-O-alkyl-2-acetyl-sn-glycerol + H2O = a 1-O-alkyl-sn-glycerol + acetate + H(+). The enzyme catalyses 1-O-hexadecyl-2-acetyl-sn-glycerol + H2O = 1-O-hexadecyl-sn-glycerol + acetate + H(+). The catalysed reaction is a cholesterol ester + H2O = cholesterol + a fatty acid + H(+). It catalyses the reaction cholesteryl (9Z-octadecenoate) + H2O = cholesterol + (9Z)-octadecenoate + H(+). Its function is as follows. Hydrolyzes 2-acetyl monoalkylglycerol ether (1-O-alkyl-2-acetyl-sn-glycerol), the penultimate precursor of the pathway for de novo synthesis of platelet-activating factor. May be responsible for the hydrolysis of cholesterol esters (such as cholesteryl (9Z-octadecenoate)) in macrophages. Also involved in organ detoxification by hydrolyzing exogenous organophosphorus compounds. The protein is Neutral cholesterol ester hydrolase 1 (Nceh1) of Rattus norvegicus (Rat).